Consider the following 390-residue polypeptide: MASTEIMTVNMGPQHPSTHGVLRLVVELDGEIIQKITPHIGYLHRGVEKLSEHRTYHQTIPLTDRLDYLAPMHNNLGYVLAVEKLLGIEVPERAQTIRVILAELTRLKSHLVWVACHALDIGAMTVFIYAFREREMVMSLYEKISGARMTSSYFRVGGLSSDVYDGFEKDVREIVDTFPGHFDTYEGLLTKNTIWLNRTVGNGVISAEDAIDYGITGPALRGSGVDWDLRRDNPYSGYEKYQFKVPVGEKCDTFDRYKVRLVEMREAVNIIRQALDSLKPGPVLADAPQVTYPPKENVYNTIEGLIHHFKIASEGFPVPEGEVYQGVENPKGELGYYIVSDGGNKPYRMRIRPPSFVNLGAIEKMAKGSMIADLVAVIGTLDIVLGEIDR.

It belongs to the complex I 49 kDa subunit family. In terms of assembly, NDH-1 is composed of 14 different subunits. Subunits NuoB, C, D, E, F, and G constitute the peripheral sector of the complex.

Its subcellular location is the cell inner membrane. The enzyme catalyses a quinone + NADH + 5 H(+)(in) = a quinol + NAD(+) + 4 H(+)(out). NDH-1 shuttles electrons from NADH, via FMN and iron-sulfur (Fe-S) centers, to quinones in the respiratory chain. The immediate electron acceptor for the enzyme in this species is believed to be ubiquinone. Couples the redox reaction to proton translocation (for every two electrons transferred, four hydrogen ions are translocated across the cytoplasmic membrane), and thus conserves the redox energy in a proton gradient. The chain is NADH-quinone oxidoreductase subunit D from Geobacter metallireducens (strain ATCC 53774 / DSM 7210 / GS-15).